The primary structure comprises 395 residues: Acetate kinase (395 aa).

Residue Asn-10 coordinates Mg(2+). ATP is bound at residue Lys-17. Residue Arg-87 participates in substrate binding. Catalysis depends on Asp-144, which acts as the Proton donor/acceptor. Residues 204-208 (HLGNG), 279-281 (DMR), and 327-331 (GIGEN) each bind ATP. Glu-381 contributes to the Mg(2+) binding site.

The protein belongs to the acetokinase family. Homodimer. The cofactor is Mg(2+). Mn(2+) is required as a cofactor.

Its subcellular location is the cytoplasm. The catalysed reaction is acetate + ATP = acetyl phosphate + ADP. The protein operates within metabolic intermediate biosynthesis; acetyl-CoA biosynthesis; acetyl-CoA from acetate: step 1/2. In terms of biological role, catalyzes the formation of acetyl phosphate from acetate and ATP. Can also catalyze the reverse reaction. This Stutzerimonas stutzeri (strain A1501) (Pseudomonas stutzeri) protein is Acetate kinase.